The sequence spans 84 residues: Beta-toxin Tf1a (84 aa).

The signal sequence occupies residues 1–20 (MKGMILFISCLLLIGIVVEC). The LCN-type CS-alpha/beta domain occupies 21–82 (KEGYLMDHEG…VWERATNRCG (62 aa)). Cystine bridges form between C31/C81, C35/C57, C43/C62, and C47/C64. At C81 the chain carries Cysteine amide.

It belongs to the long (4 C-C) scorpion toxin superfamily. Sodium channel inhibitor family. Beta subfamily. Expressed by the venom gland.

The protein localises to the secreted. In terms of biological role, beta toxins bind voltage-independently at site-4 of sodium channels (Nav) and shift the voltage of activation toward more negative potentials thereby affecting sodium channel activation and promoting spontaneous and repetitive firing. The toxin induces a leftward shift, on all channels tested (including Blattella germanica and Varroa destructor Nav1), displacing a change in voltage dependence activation to more hyperpolarized potentials. In addition, the toxin mostly inhibits peak current of hNav1.4/SCN4A (53% inhibition of peak current at 100 nM) and hNav1.5/SCN5A (71% inhibition). The chain is Beta-toxin Tf1a from Tityus fasciolatus (Central Brazilian scorpion).